The primary structure comprises 348 residues: Mannonate dehydratase (348 aa).

The protein belongs to the mannonate dehydratase family. Fe(2+) is required as a cofactor. The cofactor is Mn(2+).

It carries out the reaction D-mannonate = 2-dehydro-3-deoxy-D-gluconate + H2O. It participates in carbohydrate metabolism; pentose and glucuronate interconversion. In terms of biological role, catalyzes the dehydration of D-mannonate. The polypeptide is Mannonate dehydratase (Streptococcus agalactiae serotype Ia (strain ATCC 27591 / A909 / CDC SS700)).